Here is a 96-residue protein sequence, read N- to C-terminus: Protein RnfH (96 aa).

Belongs to the UPF0125 (RnfH) family.

The protein is Protein RnfH of Hahella chejuensis (strain KCTC 2396).